Reading from the N-terminus, the 109-residue chain is Phycoerythrin alpha-1 subunit (109 aa).

The (2R,3E)-phycocyanobilin site is built by valine 6, alanine 16, phenylalanine 17, proline 20, aspartate 27, alanine 28, and alanine 39.

The protein belongs to the phycoerythrin family. As to quaternary structure, heterotetramer of 2 identical alpha chains and 2 identical beta chains which form 2 alpha-beta heterodimers within the heterotetramer. The two alpha-beta heterodimers are rotated to an open configuration in contrast to the closed configuration found in other cryptophyte species due to the insertion of a single amino acid, Asp-65, in a conserved region of the alpha chain. In the open form, the central chromophores are not in physical contact but are separated by a water-filled channel. In terms of processing, contains three phycocyanobilin chromophores with binding mediated by both the alpha and beta subunits.

It localises to the plastid. It is found in the chloroplast thylakoid membrane. Functionally, light-harvesting photosynthetic tetrapyrrole chromophore-protein from the phycobiliprotein complex. The sequence is that of Phycoerythrin alpha-1 subunit from Hemiselmis virescens.